The sequence spans 190 residues: uncharacterized protein (190 aa).

This sequence to Synechocystis PCC 6803 sll1609 and slr1290.

This is an uncharacterized protein from Synechocystis sp. (strain ATCC 27184 / PCC 6803 / Kazusa).